Consider the following 443-residue polypeptide: D-serine dehydratase (443 aa).

K118 bears the N6-(pyridoxal phosphate)lysine mark.

This sequence belongs to the serine/threonine dehydratase family. DsdA subfamily. Monomer. Pyridoxal 5'-phosphate serves as cofactor.

The enzyme catalyses D-serine = pyruvate + NH4(+). The chain is D-serine dehydratase from Escherichia coli O17:K52:H18 (strain UMN026 / ExPEC).